The chain runs to 420 residues: Histidine--tRNA ligase (420 aa).

The protein belongs to the class-II aminoacyl-tRNA synthetase family. In terms of assembly, homodimer.

The protein localises to the cytoplasm. The catalysed reaction is tRNA(His) + L-histidine + ATP = L-histidyl-tRNA(His) + AMP + diphosphate + H(+). The polypeptide is Histidine--tRNA ligase (Thermotoga sp. (strain RQ2)).